Consider the following 63-residue polypeptide: Hyphancin-3G (63 aa).

The signal sequence occupies residues 1–22 (MNFSRILFFMFACFVALASVSA). Positions 23 to 26 (VPEP) are cleaved as a propeptide — removed by a dipeptidylpeptidase. Position 61 is a leucine amide (Leu-61).

The protein belongs to the cecropin family.

The protein resides in the secreted. Functionally, has antibacterial activity. The protein is Hyphancin-3G of Hyphantria cunea (Fall webworm moth).